The chain runs to 329 residues: Diaminopimelate epimerase (329 aa).

Residues Asn-14 and Asn-73 each coordinate substrate. Catalysis depends on Cys-82, which acts as the Proton donor. Substrate is bound by residues 83 to 84 (GN), Asn-170, Asn-206, and 224 to 225 (ER). Cys-233 acts as the Proton acceptor in catalysis. 234 to 235 (GT) serves as a coordination point for substrate.

It belongs to the diaminopimelate epimerase family. Homodimer.

The protein resides in the cytoplasm. The enzyme catalyses (2S,6S)-2,6-diaminopimelate = meso-2,6-diaminopimelate. It functions in the pathway amino-acid biosynthesis; L-lysine biosynthesis via DAP pathway; DL-2,6-diaminopimelate from LL-2,6-diaminopimelate: step 1/1. Functionally, catalyzes the stereoinversion of LL-2,6-diaminopimelate (L,L-DAP) to meso-diaminopimelate (meso-DAP), a precursor of L-lysine and an essential component of the bacterial peptidoglycan. This is Diaminopimelate epimerase from Listeria monocytogenes serotype 4a (strain HCC23).